Here is a 240-residue protein sequence, read N- to C-terminus: Carboxy-S-adenosyl-L-methionine synthase (240 aa).

Residues tyrosine 35, 61–63 (GCS), 86–87 (DN), 112–113 (DI), and arginine 194 each bind S-adenosyl-L-methionine.

It belongs to the class I-like SAM-binding methyltransferase superfamily. Cx-SAM synthase family. Homodimer.

The catalysed reaction is prephenate + S-adenosyl-L-methionine = carboxy-S-adenosyl-L-methionine + 3-phenylpyruvate + H2O. Catalyzes the conversion of S-adenosyl-L-methionine (SAM) to carboxy-S-adenosyl-L-methionine (Cx-SAM). This Wolinella succinogenes (strain ATCC 29543 / DSM 1740 / CCUG 13145 / JCM 31913 / LMG 7466 / NCTC 11488 / FDC 602W) (Vibrio succinogenes) protein is Carboxy-S-adenosyl-L-methionine synthase.